Reading from the N-terminus, the 131-residue chain is Global transcriptional regulator Spx (131 aa).

The CXXC signature appears at 10 to 13; the sequence is CTSC. A disulfide bridge connects residues cysteine 10 and cysteine 13.

It belongs to the ArsC family. Spx subfamily. As to quaternary structure, interacts with the C-terminal domain of the alpha subunit of the RNAP. A single Spx monomer interacts with RNAP to form the transcription activation complex. Interacts with the adapter protein SpxH/YjbH.

The protein localises to the cytoplasm. With respect to regulation, under non-stress conditions, Spx is degraded by ClpXP and, to a lesser extent, by ClpCP. Efficient dedradation by ClpXP requires the adapter protein SpxH/YjbH. Binding to SpxH/YjbH reduces the overall conformational flexibility of Spx and stabilizes the C-terminal ClpX recognition region of Spx. In addition, activity is modulated by the formation of a disulfide bound within the N-terminal Cys-X-X-Cys (CXXC) motif, which is required for the transcriptional activation of trxA and trxB, or for the activation of msrAB operon expression following paraquat oxidative stress. However, it seems that formation of the disulfide bound is not essential for induction of all Spx-controlled genes, as for example the case of BSH biosynthesis genes. Similarly, induction of the Spx regulon during cell wall stress is not accompanied by oxidation of the disulfide switch, but requires Spx stabilization by the anti-adapter protein SpxO/YirB. Its function is as follows. Global transcriptional regulator that plays a key role in stress response and exerts either positive or negative regulation of genes. Acts by interacting with the C-terminal domain of the alpha subunit of the RNA polymerase (RNAP). This interaction can enhance binding of RNAP to the promoter region of target genes and stimulate their transcription, or block interaction of RNAP with activator proteins and repress transcription. Exhibits no DNA-binding activity. Induces the expression of a large number of genes in response to a variety of stress conditions, such as disulfide, heat and cell wall stress, while concurrently repressing transcription of genes involved in various developmental and growth-related pathways during periods of extreme stress. Functions in the oxidative stress response via induction of the transcription of thioredoxin (trxA) and thioredoxin reductase (trxB) during thiol-specific oxidative (disulfide) stress. Mediates response to oxidative stress caused by paraquat (PQ) via induction of the methionine sulfoxide reductase genes, msrA and msrB. Also acts as a transcriptional activator of the bacillithiol (BSH) biosynthesis genes in response to oxidizing conditions and thio-reactive compounds. Involved in heat stress response and thermotolerance development, which results in diminished cellular protein aggregates. Plays an important adaptive role in the cell wall stress response. Participates in sulfate-dependent control of organosulfur metabolism. Negatively controls, via CymR, the expression of the organosulfur utilization operons ytmI, yxeI and ssu, and directly activates yrrT operon expression during growth in medium containing methionine as sole sulfur source. Negatively affects competence and sporulation. Inhibits biofilm formation in response to disulfide stress by repressing biofilm matrix genes. This Bacillus subtilis (strain 168) protein is Global transcriptional regulator Spx.